The chain runs to 144 residues: Large ribosomal subunit protein uL11m (144 aa).

The N-terminal 32 residues, 1-32 (MASTRTTIIKLIVPAGKATPTPPIGPALGARG), are a transit peptide targeting the mitochondrion.

It belongs to the universal ribosomal protein uL11 family. In terms of assembly, component of the mitochondrial large ribosomal subunit (mt-LSU). Mature yeast 74S mitochondrial ribosomes consist of a small (37S) and a large (54S) subunit. The 37S small subunit contains a 15S ribosomal RNA (15S mt-rRNA) and at least 32 different proteins. The 54S large subunit contains a 21S rRNA (21S mt-rRNA) and at least 45 different proteins.

Its subcellular location is the mitochondrion. It is found in the cytoplasm. Its function is as follows. Component of the mitochondrial ribosome (mitoribosome), a dedicated translation machinery responsible for the synthesis of mitochondrial genome-encoded proteins, including at least some of the essential transmembrane subunits of the mitochondrial respiratory chain. The mitoribosomes are attached to the mitochondrial inner membrane and translation products are cotranslationally integrated into the membrane. This chain is Large ribosomal subunit protein uL11m, found in Schizosaccharomyces pombe (strain 972 / ATCC 24843) (Fission yeast).